A 719-amino-acid polypeptide reads, in one-letter code: MPVRFKGLSEYQRNFLWKKSYLSESYNPSVGQKYTWAGLRSDQLGITKEPSFISKRRVPYYDPQISKYLEWNGTVRENDALAPPEPQIIRTPKPQEAEQREDANHETVLPQEASRVPKRTRSHSADSRAEGASDGVEKHQDVTKNHSLVNADVELRPSTKPLPESIEPRLDRHLRKKAGLAVVPLNNALRNSEYQRQFVWKTCKETAPVCAANQVFRNKSQVIPQFQGNTFIHESEYKRNFKGLTPVKEPKLREYLKGNSSFEILSPEKKADEPLDLEVDMASEDSDQPIKKPAPWRHQRLGKVNSEYRAKFLSPAQYLYKAGAWTRVKESLSHQGSLNAMWYAEVKELREKAESYRKRVQGTHFSRDHLNQIMSDSNCCWDVSSVASSEGTISSNIQALDLAGDLTSHRTLQKHPPTKLEEKKVALAEQPLENTIRSLELPEAPTMARRKLAWDAAEGTQKEDTQEEPSGEEDGREARGKDKQVCAGELQKVDMQTSKADGPTEGSETSSVSSGKGGRLPTPRLRELGIQRTHHDLTTPAVGGAVLVSPAKAKPSALEQRRRPSSQDGLETLKKGITKKGKHRPLSLLTSPTAGMKTVDPLPLRQDCDANVLRVAEGTLPVLKNLDHQTNTPGQPSPCTLPYCHPSSRIQGRLRDPEFQHNIGKPRMNNTQLLPHGAFNDEDADRLSEISARSAVSSLQAFQTLARAQKRKENFWGKP.

The ST]-E-Y-X(3)-F motif 1; required for efficient microtubule binding and stabilization signature appears at 9–15 (SEYQRNF). Positions 78–165 (NDALAPPEPQ…RPSTKPLPES (88 aa)) are disordered. Basic and acidic residues-rich tracts occupy residues 93–105 (KPQE…DANH) and 123–144 (HSAD…DVTK). Residues Ser-124 and Ser-127 each carry the phosphoserine modification. Positions 192–198 (SEYQRQF) match the ST]-E-Y-X(3)-F motif 2; required for efficient microtubule binding and stabilization motif. The short motif at 235–241 (SEYKRNF) is the ST]-E-Y-X(3)-F motif 3; required for efficient microtubule binding and stabilization element. Phosphoserine is present on residues Ser-266, Ser-283, and Ser-286. The ST]-E-Y-X(3)-F motif 4; required for efficient microtubule binding and stabilization motif lies at 306–312 (SEYRAKF). Residue Ser-314 is modified to Phosphoserine. A coiled-coil region spans residues 339–364 (NAMWYAEVKELREKAESYRKRVQGTH). The segment at 453 to 523 (AWDAAEGTQK…SGKGGRLPTP (71 aa)) is disordered. The segment covering 465-475 (TQEEPSGEEDG) has biased composition (acidic residues). Positions 503 to 514 (PTEGSETSSVSS) are enriched in low complexity. Phosphoserine occurs at positions 565, 566, and 591.

The protein belongs to the MDM1 family.

The protein resides in the nucleus. Its subcellular location is the cytoplasm. It localises to the cytoskeleton. The protein localises to the microtubule organizing center. It is found in the centrosome. The protein resides in the centriole. Its function is as follows. Microtubule-binding protein that negatively regulates centriole duplication. Binds to and stabilizes microtubules. The polypeptide is Nuclear protein MDM1 (Mdm1) (Rattus norvegicus (Rat)).